A 58-amino-acid polypeptide reads, in one-letter code: MAQPKRRWSKQRTHKHRANWKIEAPNLVECPQCHEMKLPHRVCPSCGYYKNRKVVNED.

Belongs to the bacterial ribosomal protein bL32 family.

The polypeptide is Large ribosomal subunit protein bL32 (Caldicellulosiruptor saccharolyticus (strain ATCC 43494 / DSM 8903 / Tp8T 6331)).